The primary structure comprises 239 residues: Small ribosomal subunit protein uS3c (239 aa).

In terms of domain architecture, KH type-2 spans 43 to 139 (IKNYIQKNRK…RFNISIEKVK (97 aa)). Residues 50–74 (NRKKGSNRKIESDSSSEVITHNRKM) are disordered.

It belongs to the universal ribosomal protein uS3 family. In terms of assembly, part of the 30S ribosomal subunit.

It is found in the plastid. It localises to the chloroplast. The protein is Small ribosomal subunit protein uS3c (rps3) of Triticum aestivum (Wheat).